A 327-amino-acid polypeptide reads, in one-letter code: Ribosomal RNA small subunit methyltransferase H (327 aa).

S-adenosyl-L-methionine contacts are provided by residues Gly41–His43, Asp60, Tyr87, Asp108, and Gln115. The disordered stretch occupies residues Ala292 to Arg327.

The protein belongs to the methyltransferase superfamily. RsmH family.

The protein resides in the cytoplasm. It carries out the reaction cytidine(1402) in 16S rRNA + S-adenosyl-L-methionine = N(4)-methylcytidine(1402) in 16S rRNA + S-adenosyl-L-homocysteine + H(+). Its function is as follows. Specifically methylates the N4 position of cytidine in position 1402 (C1402) of 16S rRNA. The protein is Ribosomal RNA small subunit methyltransferase H of Kocuria rhizophila (strain ATCC 9341 / DSM 348 / NBRC 103217 / DC2201).